Consider the following 115-residue polypeptide: MFSIIQNIEKEQIKKNIPVFRSGDTIEVKVWVIEGSKKRLQSFEGIVIAIKNRCLNSSFTVRKISNGEGVERVFQTHSHGIEEILVKRKGLVRKAKLYYLRTRTGKAARIKERLN.

This sequence belongs to the bacterial ribosomal protein bL19 family.

This protein is located at the 30S-50S ribosomal subunit interface and may play a role in the structure and function of the aminoacyl-tRNA binding site. This chain is Large ribosomal subunit protein bL19 (rplS), found in Buchnera aphidicola subsp. Acyrthosiphon pisum (strain APS) (Acyrthosiphon pisum symbiotic bacterium).